The primary structure comprises 283 residues: Pantothenate synthetase (283 aa).

Residue 34-41 participates in ATP binding; it reads MGALHDGH. Residue His-41 is the Proton donor of the active site. Residue Gln-65 participates in (R)-pantoate binding. Gln-65 serves as a coordination point for beta-alanine. 152-155 contacts ATP; sequence GSKD. Gln-158 provides a ligand contact to (R)-pantoate. ATP is bound by residues Val-181 and 189 to 192; that span reads MSSR.

It belongs to the pantothenate synthetase family. Homodimer.

The protein localises to the cytoplasm. The enzyme catalyses (R)-pantoate + beta-alanine + ATP = (R)-pantothenate + AMP + diphosphate + H(+). Its pathway is cofactor biosynthesis; (R)-pantothenate biosynthesis; (R)-pantothenate from (R)-pantoate and beta-alanine: step 1/1. Functionally, catalyzes the condensation of pantoate with beta-alanine in an ATP-dependent reaction via a pantoyl-adenylate intermediate. This Rhodopseudomonas palustris (strain ATCC BAA-98 / CGA009) protein is Pantothenate synthetase.